The following is a 321-amino-acid chain: Cytochrome f (321 aa).

Positions 1–35 (MQNRKTYDDWVKKWITQSISVLIMIDIMTRTSIAN) are cleaved as a signal peptide. Residues Tyr37, Cys57, Cys60, and His61 each contribute to the heme site. The chain crosses the membrane as a helical span at residues 287–307 (VQGLLLFLASVVLAQIFLVLK).

Belongs to the cytochrome f family. As to quaternary structure, the 4 large subunits of the cytochrome b6-f complex are cytochrome b6, subunit IV (17 kDa polypeptide, petD), cytochrome f and the Rieske protein, while the 4 small subunits are PetG, PetL, PetM and PetN. The complex functions as a dimer. The cofactor is heme.

It localises to the plastid. It is found in the chloroplast thylakoid membrane. Component of the cytochrome b6-f complex, which mediates electron transfer between photosystem II (PSII) and photosystem I (PSI), cyclic electron flow around PSI, and state transitions. This Cryptomeria japonica (Japanese cedar) protein is Cytochrome f.